The primary structure comprises 168 residues: uncharacterized protein (168 aa).

The N-acetyltransferase domain occupies 7–168 (ERIDTLKTGD…TAKGWPDISM (162 aa)).

This is an uncharacterized protein from Azospirillum brasilense.